We begin with the raw amino-acid sequence, 301 residues long: Transcription elongation factor A protein 1 (301 aa).

Met1 bears the N-acetylmethionine mark. Residues 3-80 enclose the TFIIS N-terminal domain; it reads DEVIRIAKKM…KSWKKLLDGP (78 aa). Lys55 participates in a covalent cross-link: Glycyl lysine isopeptide (Lys-Gly) (interchain with G-Cter in ubiquitin). 4 positions are modified to phosphoserine: Ser57, Ser81, Ser97, and Ser100. Residues 76–93 show a composition bias toward basic and acidic residues; sequence LLDGPSTDKDSEEKKKDT. The segment at 76 to 139 is disordered; that stretch reads LLDGPSTDKD…FPRAPSTSDS (64 aa). Positions 140–256 constitute a TFIIS central domain; the sequence is VRLKCREMLA…EHQMAKTGGT (117 aa). The segment at 259-299 adopts a TFIIS-type zinc-finger fold; the sequence is DLFTCGKCKKKNCTYTQVQTRSADEPMTTFVVCNECGNRWK. Zn(2+) is bound by residues Cys263, Cys266, Cys291, and Cys294.

This sequence belongs to the TFS-II family. In terms of assembly, interacts with EAF2. Associates with UBR5 and forms a transcription regulatory complex made of CDK9, Pol II, UBR5 and TCEA1/TFIIS. Part of TBP-based Pol II pre-initiation complex (PIC), in which Pol II core assembles with general transcription factors and other specific initiation factors including GTF2E1, GTF2E2, GTF2F1, GTF2F2, TCEA1, ERCC2, ERCC3, GTF2H2, GTF2H3, GTF2H4, GTF2H5, GTF2A1, GTF2A2, GTF2B and TBP; this large multi-subunit PIC complex mediates DNA unwinding and targets Pol II core to the transcription start site where the first phosphodiester bond forms.

The protein localises to the nucleus. Functionally, necessary for efficient RNA polymerase II transcription elongation past template-encoded arresting sites. The arresting sites in DNA have the property of trapping a certain fraction of elongating RNA polymerases that pass through, resulting in locked ternary complexes. Cleavage of the nascent transcript by S-II allows the resumption of elongation from the new 3'-terminus. In Bos taurus (Bovine), this protein is Transcription elongation factor A protein 1 (TCEA1).